Here is a 290-residue protein sequence, read N- to C-terminus: Ribosomal RNA small subunit methyltransferase A (290 aa).

S-adenosyl-L-methionine-binding residues include Asn27, Leu29, Gly54, Glu75, Asp100, and Asn125.

It belongs to the class I-like SAM-binding methyltransferase superfamily. rRNA adenine N(6)-methyltransferase family. RsmA subfamily.

The protein localises to the cytoplasm. It carries out the reaction adenosine(1518)/adenosine(1519) in 16S rRNA + 4 S-adenosyl-L-methionine = N(6)-dimethyladenosine(1518)/N(6)-dimethyladenosine(1519) in 16S rRNA + 4 S-adenosyl-L-homocysteine + 4 H(+). In terms of biological role, specifically dimethylates two adjacent adenosines (A1518 and A1519) in the loop of a conserved hairpin near the 3'-end of 16S rRNA in the 30S particle. May play a critical role in biogenesis of 30S subunits. This is Ribosomal RNA small subunit methyltransferase A from Streptococcus pneumoniae (strain ATCC 700669 / Spain 23F-1).